We begin with the raw amino-acid sequence, 338 residues long: Photosystem II assembly lipoprotein Ycf48 (338 aa).

The first 23 residues, 1 to 23 (MKKIITSFPNLLLSILLCFVLSS), serve as a signal peptide directing secretion. Cysteine 24 carries the N-palmitoyl cysteine lipid modification. The S-diacylglycerol cysteine moiety is linked to residue cysteine 24.

The protein belongs to the Ycf48 family. Part of early PSII assembly complexes which includes D1 (psbA) and PsbI; not found in mature PSII. Binds to the lumenal side of PSII complexes. Interacts with YidC.

The protein resides in the cellular thylakoid membrane. A factor required for optimal assembly of photosystem II (PSII), acting in the early stages of PSII assembly. Also plays a role in replacement of photodamaged D1 (psbA). Assists YidC in synthesis of chlorophyll-binding proteins. This is Photosystem II assembly lipoprotein Ycf48 from Prochlorococcus marinus (strain MIT 9312).